We begin with the raw amino-acid sequence, 386 residues long: Succinate--CoA ligase [ADP-forming] subunit beta (386 aa).

The ATP-grasp domain occupies 9 to 244 (KEIFRKYGVP…LAEEEPREIQ (236 aa)). Residues Lys-46, 53 to 55 (GRG), Glu-99, Leu-102, and Glu-107 contribute to the ATP site. Asn-199 and Asp-213 together coordinate Mg(2+). Substrate-binding positions include Asn-264 and 321–323 (GIM).

It belongs to the succinate/malate CoA ligase beta subunit family. Heterotetramer of two alpha and two beta subunits. It depends on Mg(2+) as a cofactor.

The catalysed reaction is succinate + ATP + CoA = succinyl-CoA + ADP + phosphate. The enzyme catalyses GTP + succinate + CoA = succinyl-CoA + GDP + phosphate. It participates in carbohydrate metabolism; tricarboxylic acid cycle; succinate from succinyl-CoA (ligase route): step 1/1. Succinyl-CoA synthetase functions in the citric acid cycle (TCA), coupling the hydrolysis of succinyl-CoA to the synthesis of either ATP or GTP and thus represents the only step of substrate-level phosphorylation in the TCA. The beta subunit provides nucleotide specificity of the enzyme and binds the substrate succinate, while the binding sites for coenzyme A and phosphate are found in the alpha subunit. This Myxococcus xanthus (strain DK1622) protein is Succinate--CoA ligase [ADP-forming] subunit beta.